Here is a 357-residue protein sequence, read N- to C-terminus: tRNA N6-adenosine threonylcarbamoyltransferase (357 aa).

Fe cation contacts are provided by His115 and His119. Substrate-binding positions include Leu137–Gly141, Asp170, Gly183, and Asn281. A Fe cation-binding site is contributed by Asp309.

It belongs to the KAE1 / TsaD family. Fe(2+) is required as a cofactor.

The protein localises to the cytoplasm. The catalysed reaction is L-threonylcarbamoyladenylate + adenosine(37) in tRNA = N(6)-L-threonylcarbamoyladenosine(37) in tRNA + AMP + H(+). Functionally, required for the formation of a threonylcarbamoyl group on adenosine at position 37 (t(6)A37) in tRNAs that read codons beginning with adenine. Is involved in the transfer of the threonylcarbamoyl moiety of threonylcarbamoyl-AMP (TC-AMP) to the N6 group of A37, together with TsaE and TsaB. TsaD likely plays a direct catalytic role in this reaction. The polypeptide is tRNA N6-adenosine threonylcarbamoyltransferase (Afipia carboxidovorans (strain ATCC 49405 / DSM 1227 / KCTC 32145 / OM5) (Oligotropha carboxidovorans)).